A 239-amino-acid chain; its full sequence is Ribose-5-phosphate isomerase A (239 aa).

Substrate-binding positions include 40 to 43 (SGST), 96 to 99 (DGAD), and 110 to 113 (KGGG). Glutamate 119 serves as the catalytic Proton acceptor. A substrate-binding site is contributed by lysine 137.

Belongs to the ribose 5-phosphate isomerase family. In terms of assembly, homodimer.

The enzyme catalyses aldehydo-D-ribose 5-phosphate = D-ribulose 5-phosphate. It participates in carbohydrate degradation; pentose phosphate pathway; D-ribose 5-phosphate from D-ribulose 5-phosphate (non-oxidative stage): step 1/1. Functionally, catalyzes the reversible conversion of ribose-5-phosphate to ribulose 5-phosphate. The sequence is that of Ribose-5-phosphate isomerase A from Methanococcus vannielii (strain ATCC 35089 / DSM 1224 / JCM 13029 / OCM 148 / SB).